The sequence spans 40 residues: Photosystem II reaction center protein J (40 aa).

A helical membrane pass occupies residues 8-28 (IPLWLIGTLTGILVIGLIGIF).

Belongs to the PsbJ family. PSII is composed of 1 copy each of membrane proteins PsbA, PsbB, PsbC, PsbD, PsbE, PsbF, PsbH, PsbI, PsbJ, PsbK, PsbL, PsbM, PsbT, PsbX, PsbY, PsbZ, Psb30/Ycf12, at least 3 peripheral proteins of the oxygen-evolving complex and a large number of cofactors. It forms dimeric complexes.

It localises to the plastid. The protein resides in the chloroplast thylakoid membrane. Functionally, one of the components of the core complex of photosystem II (PSII). PSII is a light-driven water:plastoquinone oxidoreductase that uses light energy to abstract electrons from H(2)O, generating O(2) and a proton gradient subsequently used for ATP formation. It consists of a core antenna complex that captures photons, and an electron transfer chain that converts photonic excitation into a charge separation. This Phalaenopsis aphrodite subsp. formosana (Moth orchid) protein is Photosystem II reaction center protein J.